Here is a 464-residue protein sequence, read N- to C-terminus: MLYSKENKESYLEPVFGSSAEDRDIPKYTLGKEPLEPRIAYRLVKDELLDEGSARQNLATFCQTYMEDEATKLMSETLEKNAIDKSEYPRTAELENRCVNIIADLWHAPKDQKFMGTSTIGSSEACMLGGMAMKFAWRKRAEKLGLDIYAKKPNLVISSGYQVCWEKFCVYWDIDMRVVPMDKEHMQLNTDQVLDYVDEYTIGVVGILGITYTGRYDDIYALNEKLEEYNSKTDYKVYIHVDAASGGFFTPFVEPDIIWDFRLKNVISINTSGHKYGLVYPGIGWVLWKDESYLPEELIFKVSYLGGEMPTMQINFSRSASHIIGQYYNFLRYGFEGYRTIHQKTSDVAQYLAHAVEQTGYFDIFNDGSHLPIVCYKLKDDANVNWTLYDLADRLQMRGWQVPAYPLPKSLENIIIQRYVCRADLGFNMAEEFIQDFQASIQELNNAHILFHDTQQSGVHGFTH.

Residue lysine 275 is modified to N6-(pyridoxal phosphate)lysine.

It belongs to the group II decarboxylase family. It depends on pyridoxal 5'-phosphate as a cofactor.

The enzyme catalyses L-glutamate + H(+) = 4-aminobutanoate + CO2. In terms of biological role, converts internalized glutamate to GABA and increases the internal pH. Involved in glutamate-dependent acid resistance in gastric fluid. This chain is Glutamate decarboxylase beta (gadB), found in Listeria monocytogenes serovar 1/2a (strain ATCC BAA-679 / EGD-e).